Reading from the N-terminus, the 938-residue chain is Ankyrin repeat and LEM domain-containing protein 2 (938 aa).

Residues 1 to 12 (MLWPRLAAAEWA) are Lumenal-facing. A helical; Signal-anchor for type III membrane protein membrane pass occupies residues 13–32 (ALAWELLGASVLLIAVRWLV). Topologically, residues 33 to 938 (RRLGPRPGGL…MARLAELAAL (906 aa)) are cytoplasmic. Residues 69–113 (LARLKLLNPDDLREEIVKAGLKCGPITSTTRFIFEKKLAQALLEQ) enclose the LEM domain. Residues serine 259 and serine 268 each carry the phosphoserine modification. The ANK repeat unit spans residues 411–440 (GYDTPLHFACKFGNADVVNVLSSHHLIVKN). A phosphoserine mark is found at serine 488, serine 496, serine 512, and serine 528. Positions 609–627 (GKKAQQETGEREASCRDKA) are enriched in basic and acidic residues. The interval 609 to 636 (GKKAQQETGEREASCRDKATTSGSNSIS) is disordered. Serine 662, serine 804, serine 896, and serine 914 each carry phosphoserine. Residues 870–924 (RQSWPSPAVKGRFKSQLPDLSGPHSYSPGRNSVAGSNPAKPGLGSPGRYSPVHGS) form a disordered region.

This sequence belongs to the ANKLE2 family. In terms of assembly, interacts with BAF/BANF1. Interacts with protein phosphatase 2A (PP2A) components PPP2C (PPP2CA or PPP2CB) and PPP2R1A. (Microbial infection) May interact with non-structural protein 4A/NS4A from Zika virus strains Mr-766 or French Polynesia 10087PF/2013; the interaction may inhibit ANKLE2 function and contribute to defects in brain development, such as microcephaly.

It localises to the endoplasmic reticulum membrane. Involved in mitotic nuclear envelope reassembly by promoting dephosphorylation of BAF/BANF1 during mitotic exit. Coordinates the control of BAF/BANF1 dephosphorylation by inhibiting VRK1 kinase and promoting dephosphorylation of BAF/BANF1 by protein phosphatase 2A (PP2A), thereby facilitating nuclear envelope assembly. May regulate nuclear localization of VRK1 in non-dividing cells. It is unclear whether it acts as a real PP2A regulatory subunit or whether it is involved in recruitment of the PP2A complex. Involved in brain development. The polypeptide is Ankyrin repeat and LEM domain-containing protein 2 (ANKLE2) (Homo sapiens (Human)).